The chain runs to 112 residues: Cytochrome c-551 (112 aa).

The N-terminal stretch at 1–20 (MKSKLSILMIGFALSVLLAA) is a signal peptide. A lipid anchor (N-palmitoyl cysteine) is attached at Cys-21. The S-diacylglycerol cysteine moiety is linked to residue Cys-21. The span at 25–35 (DAKEEKTDTGS) shows a compositional bias: basic and acidic residues. The tract at residues 25–44 (DAKEEKTDTGSKTEATASEG) is disordered. The 74-residue stretch at 39-112 (ATASEGEELY…VIAKWLSEKK (74 aa)) folds into the Cytochrome c domain. Heme c-binding residues include Cys-52, Cys-55, His-56, and Met-91.

Binds 1 heme c group covalently per subunit.

The protein resides in the cell membrane. Its function is as follows. Electron carrier protein. The polypeptide is Cytochrome c-551 (cccB) (Bacillus subtilis (strain 168)).